We begin with the raw amino-acid sequence, 369 residues long: Phenylalanine--tRNA ligase alpha subunit (369 aa).

A Mg(2+)-binding site is contributed by Glu269.

This sequence belongs to the class-II aminoacyl-tRNA synthetase family. Phe-tRNA synthetase alpha subunit type 1 subfamily. Tetramer of two alpha and two beta subunits. Mg(2+) is required as a cofactor.

It localises to the cytoplasm. It catalyses the reaction tRNA(Phe) + L-phenylalanine + ATP = L-phenylalanyl-tRNA(Phe) + AMP + diphosphate + H(+). The chain is Phenylalanine--tRNA ligase alpha subunit from Brucella melitensis biotype 1 (strain ATCC 23456 / CCUG 17765 / NCTC 10094 / 16M).